Reading from the N-terminus, the 158-residue chain is NAD(P)H-quinone oxidoreductase subunit J, chloroplastic (158 aa).

This sequence belongs to the complex I 30 kDa subunit family. As to quaternary structure, NDH is composed of at least 16 different subunits, 5 of which are encoded in the nucleus.

The protein localises to the plastid. It is found in the chloroplast thylakoid membrane. The catalysed reaction is a plastoquinone + NADH + (n+1) H(+)(in) = a plastoquinol + NAD(+) + n H(+)(out). It carries out the reaction a plastoquinone + NADPH + (n+1) H(+)(in) = a plastoquinol + NADP(+) + n H(+)(out). Its function is as follows. NDH shuttles electrons from NAD(P)H:plastoquinone, via FMN and iron-sulfur (Fe-S) centers, to quinones in the photosynthetic chain and possibly in a chloroplast respiratory chain. The immediate electron acceptor for the enzyme in this species is believed to be plastoquinone. Couples the redox reaction to proton translocation, and thus conserves the redox energy in a proton gradient. This Drimys granadensis protein is NAD(P)H-quinone oxidoreductase subunit J, chloroplastic.